The following is a 344-amino-acid chain: L-rhamnose-proton symporter (344 aa).

A run of 10 helical transmembrane segments spans residues 4-24 (AITM…CFYA), 38-58 (WSVG…ALLL), 68-88 (FSLS…IGNI), 101-121 (MGIG…TPII), 137-157 (TLLG…AGQL), 175-195 (LVLA…MNAA), 214-234 (LPSY…FCFI), 259-279 (VLLS…YAWG), 290-310 (ISWM…GLVL), and 323-343 (VLSL…MGMA).

This sequence belongs to the L-rhamnose transporter (TC 2.A.7.6) family.

The protein resides in the cell inner membrane. The catalysed reaction is L-rhamnopyranose(in) + H(+)(in) = L-rhamnopyranose(out) + H(+)(out). Its function is as follows. Uptake of L-rhamnose across the cytoplasmic membrane with the concomitant transport of protons into the cell (symport system). The protein is L-rhamnose-proton symporter of Escherichia coli O17:K52:H18 (strain UMN026 / ExPEC).